Consider the following 309-residue polypeptide: Curved DNA-binding protein (309 aa).

The region spanning 5–69 (DYYAILGVKP…ERRAEYDQLR (65 aa)) is the J domain.

The protein resides in the cytoplasm. It is found in the nucleoid. DNA-binding protein that preferentially recognizes a curved DNA sequence. It is probably a functional analog of DnaJ; displays overlapping activities with DnaJ, but functions under different conditions, probably acting as a molecular chaperone in an adaptive response to environmental stresses other than heat shock. Lacks autonomous chaperone activity; binds native substrates and targets them for recognition by DnaK. Its activity is inhibited by the binding of CbpM. The polypeptide is Curved DNA-binding protein (Serratia proteamaculans (strain 568)).